The primary structure comprises 497 residues: Glycerol kinase (497 aa).

Thr12 serves as a coordination point for ADP. ATP contacts are provided by Thr12, Thr13, and Ser14. Thr12 provides a ligand contact to sn-glycerol 3-phosphate. Arg16 provides a ligand contact to ADP. Sn-glycerol 3-phosphate-binding residues include Arg82, Glu83, Tyr134, and Asp243. Residues Arg82, Glu83, Tyr134, Asp243, and Gln244 each contribute to the glycerol site. Residues Thr265 and Gly308 each coordinate ADP. The ATP site is built by Thr265, Gly308, Gln312, and Gly409. Residues Gly409 and Asn413 each contribute to the ADP site.

The protein belongs to the FGGY kinase family. As to quaternary structure, homotetramer and homodimer (in equilibrium).

The enzyme catalyses glycerol + ATP = sn-glycerol 3-phosphate + ADP + H(+). It functions in the pathway polyol metabolism; glycerol degradation via glycerol kinase pathway; sn-glycerol 3-phosphate from glycerol: step 1/1. Its activity is regulated as follows. Activated by phosphorylation and inhibited by fructose 1,6-bisphosphate (FBP). Key enzyme in the regulation of glycerol uptake and metabolism. Catalyzes the phosphorylation of glycerol to yield sn-glycerol 3-phosphate. This Thermoanaerobacter pseudethanolicus (strain ATCC 33223 / 39E) (Clostridium thermohydrosulfuricum) protein is Glycerol kinase.